The following is a 402-amino-acid chain: 2-pyrone synthase (402 aa).

Acetoacetyl-CoA contacts are provided by Lys-60, Arg-63, Cys-169, Leu-272, Arg-274, Gly-310, Arg-312, and Ala-313. The active site involves Cys-169.

Belongs to the thiolase-like superfamily. Chalcone/stilbene synthases family. Expressed in both vegetative and reproductive organs. The expression is strong in the leaf, scape (the inflorescence stem) and corolla (both in the ligule and the unpigmented tube), moderate in the bract and carpel, detectable in the root and pappus but not detectable in the stamen.

It catalyses the reaction 2 malonyl-CoA + acetyl-CoA + 2 H(+) = triacetate lactone + 2 CO2 + 3 CoA. In terms of biological role, polyketide synthase, which uses acetyl-CoA and two condensation reactions with malonyl-CoA to form triacetic acid lactone (also called methylpyrone), a precursor of phytoalexin. May participate in insect and pathogen resistance. The sequence is that of 2-pyrone synthase from Gerbera hybrida (Daisy).